The following is a 256-amino-acid chain: Dihydromonacolin L-[lovastatin nonaketide synthase] thioesterase (256 aa).

Residues S122, D201, and H229 each act as charge relay system in the active site.

This sequence belongs to the LovG family.

It catalyses the reaction dihydromonacolin L-[lovastatin nonaketide synthase] + H2O = holo-[lovastatin nonaketide synthase] + dihydromonacolin L carboxylate + H(+). The protein operates within polyketide biosynthesis; lovastatin biosynthesis. Its function is as follows. Esterase; part of the gene cluster that mediates the biosynthesis of lovastatin (also known as mevinolin, mevacor or monacolin K), a hypolipidemic inhibitor of (3S)-hydroxymethylglutaryl-coenzyme A (HMG-CoA) reductase (HMGR). The first step in the biosynthesis of lovastatin is the production of dihydromonacolin L acid by the lovastatin nonaketide synthase lovB and the trans-acting enoyl reductase lovC via condensation of one acetyl-CoA unit and 8 malonyl-CoA units. Dihydromonacolin L acid is released from lovB by the thioesterase lovG. Next, dihydromonacolin L acid is oxidized by the dihydromonacolin L monooxygenase lovA twice to form monacolin J acid. The 2-methylbutyrate moiety of lovastatin is synthesized by the lovastatin diketide synthase lovF via condensation of one acetyl-CoA unit and one malonyl-CoA unit. Finally, the covalent attachment of this moiety to monacolin J acid is catalyzed by the transesterase lovD to yield lovastatin. LovD has broad substrate specificity and can also convert monacolin J to simvastatin using alpha-dimethylbutanoyl-S-methyl-3-mercaptopropionate (DMB-S-MMP) as the thioester acyl donor, and can also catalyze the reverse reaction and function as hydrolase in vitro. LovD has much higher activity with LovF-bound 2-methylbutanoate than with free diketide substrates. In terms of biological role, esterase that catalyzes the release of covalently bound dihydromonacolin L from LovB during lovastatin biosynthesis. The polypeptide is Dihydromonacolin L-[lovastatin nonaketide synthase] thioesterase (Aspergillus terreus (strain NIH 2624 / FGSC A1156)).